Consider the following 224-residue polypeptide: Ribosomal RNA large subunit methyltransferase E (224 aa).

Positions 60, 62, 93, 109, and 137 each coordinate S-adenosyl-L-methionine. Lys-177 (proton acceptor) is an active-site residue.

Belongs to the class I-like SAM-binding methyltransferase superfamily. RNA methyltransferase RlmE family.

It localises to the cytoplasm. The catalysed reaction is uridine(2552) in 23S rRNA + S-adenosyl-L-methionine = 2'-O-methyluridine(2552) in 23S rRNA + S-adenosyl-L-homocysteine + H(+). In terms of biological role, specifically methylates the uridine in position 2552 of 23S rRNA at the 2'-O position of the ribose in the fully assembled 50S ribosomal subunit. This is Ribosomal RNA large subunit methyltransferase E from Polynucleobacter asymbioticus (strain DSM 18221 / CIP 109841 / QLW-P1DMWA-1) (Polynucleobacter necessarius subsp. asymbioticus).